A 325-amino-acid chain; its full sequence is Protein FAM50B (325 aa).

The residue at position 2 (A2) is an N-acetylalanine. Disordered regions lie at residues 92–111 (QHLE…EQRR) and 137–160 (RRAG…DREE).

It belongs to the FAM50 family. As to expression, widely expressed. Mostly abundant in testis and adult and fetal brain.

In Homo sapiens (Human), this protein is Protein FAM50B (FAM50B).